Reading from the N-terminus, the 356-residue chain is GDP-mannose 4,6 dehydratase (356 aa).

NADP(+) contacts are provided by residues 12-17 (GITGQD), 69-70 (DL), 91-95 (LGAQS), and tyrosine 106. The active site involves threonine 138. Active-site nucleophile residues include glutamate 140 and tyrosine 162. NADP(+) is bound by residues lysine 166, histidine 192, and arginine 197.

The protein belongs to the NAD(P)-dependent epimerase/dehydratase family. GDP-mannose 4,6-dehydratase subfamily. NADP(+) serves as cofactor.

The enzyme catalyses GDP-alpha-D-mannose = GDP-4-dehydro-alpha-D-rhamnose + H2O. Its pathway is nucleotide-sugar biosynthesis; GDP-L-fucose biosynthesis via de novo pathway; GDP-L-fucose from GDP-alpha-D-mannose: step 1/2. In terms of biological role, participates in the synthesis of GDP-L-fucose, catalyzing the conversion of GDP-D-mannose to GDP-4-dehydro-6-deoxy-D-mannose (GDP-4-dehydro-alpha-D-rhamnose) which is further catalyzed by GDP-L-fucose synthase (ger). GDP-L-fucose is important for the synthesis of fucosylated N-glycans which are expressed on the cell surface. This chain is GDP-mannose 4,6 dehydratase (gmd), found in Dictyostelium discoideum (Social amoeba).